A 315-amino-acid polypeptide reads, in one-letter code: Zinc finger protein 691 (315 aa).

Residues 1–10 show a composition bias toward polar residues; sequence MSLCSPTHSA. The tract at residues 1 to 90 is disordered; it reads MSLCSPTHSA…QETHPKKPWQ (90 aa). Positions 33-58 are enriched in basic and acidic residues; sequence GSEKEQSPEPHLPEEGEGGKPWRVDD. Phosphoserine is present on residues Ser39, Ser75, and Ser77. Residue Lys113 forms a Glycyl lysine isopeptide (Lys-Gly) (interchain with G-Cter in SUMO2) linkage. 7 consecutive C2H2-type zinc fingers follow at residues 115–137, 143–165, 171–193, 199–221, 227–249, 255–277, and 283–305; these read FICA…QRIH, YKCS…ERIH, YKCP…QQDH, YRCD…HRTH, YICC…HRTH, YECT…QRTH, and YRCT…QKTH.

It belongs to the krueppel C2H2-type zinc-finger protein family.

The protein localises to the nucleus. Its function is as follows. May be involved in transcriptional regulation. This chain is Zinc finger protein 691 (ZNF691), found in Homo sapiens (Human).